Here is a 95-residue protein sequence, read N- to C-terminus: Protein YY1 (95 aa).

The N-terminal stretch at 1 to 26 is a signal peptide; it reads MAVTRTALLVVLVAGAMTMTMRGAEA. Disulfide bonds link C31–C72, C41–C61, C62–C87, and C74–C94.

It belongs to the A9/FIL1 family. Anther.

The protein resides in the secreted. The chain is Protein YY1 from Oryza sativa subsp. japonica (Rice).